The following is a 179-amino-acid chain: MNKPIDLKSAIRTISNYPKPGIEFRDITTLLGDARAFRRAVDELVQPWAGTKVDKIAGMEARGFILGGAVAHQLSAGFVPIRKKGKLPHTTVSIAYSLEYGLDEMEIHADAVVKGEKVILVDDLIATGGTATGAVGLLQKLGAEVIAACFVIDLPDLGGAKKIEALGVPVRSLISFEGH.

This sequence belongs to the purine/pyrimidine phosphoribosyltransferase family. As to quaternary structure, homodimer.

It localises to the cytoplasm. It catalyses the reaction AMP + diphosphate = 5-phospho-alpha-D-ribose 1-diphosphate + adenine. The protein operates within purine metabolism; AMP biosynthesis via salvage pathway; AMP from adenine: step 1/1. Its function is as follows. Catalyzes a salvage reaction resulting in the formation of AMP, that is energically less costly than de novo synthesis. This chain is Adenine phosphoribosyltransferase, found in Beijerinckia indica subsp. indica (strain ATCC 9039 / DSM 1715 / NCIMB 8712).